Here is a 100-residue protein sequence, read N- to C-terminus: Urease subunit gamma (100 aa).

This sequence belongs to the urease gamma subunit family. Heterotrimer of UreA (gamma), UreB (beta) and UreC (alpha) subunits. Three heterotrimers associate to form the active enzyme.

Its subcellular location is the cytoplasm. It carries out the reaction urea + 2 H2O + H(+) = hydrogencarbonate + 2 NH4(+). The protein operates within nitrogen metabolism; urea degradation; CO(2) and NH(3) from urea (urease route): step 1/1. This is Urease subunit gamma from Rhodopseudomonas palustris (strain BisB5).